The sequence spans 365 residues: 2-aminoethylphosphonate--pyruvate transaminase (365 aa).

The residue at position 194 (K194) is an N6-(pyridoxal phosphate)lysine.

Belongs to the class-V pyridoxal-phosphate-dependent aminotransferase family. PhnW subfamily. Homodimer. Pyridoxal 5'-phosphate is required as a cofactor.

It catalyses the reaction (2-aminoethyl)phosphonate + pyruvate = phosphonoacetaldehyde + L-alanine. Its function is as follows. Involved in phosphonate degradation. In Bacillus cereus (strain ATCC 14579 / DSM 31 / CCUG 7414 / JCM 2152 / NBRC 15305 / NCIMB 9373 / NCTC 2599 / NRRL B-3711), this protein is 2-aminoethylphosphonate--pyruvate transaminase.